A 132-amino-acid polypeptide reads, in one-letter code: Small ribosomal subunit protein uS9 (132 aa).

Positions 100-132 (LKSNGLLTRDDRTKERKKPGLKRARKAPQYTKR) are disordered. The span at 114 to 132 (ERKKPGLKRARKAPQYTKR) shows a compositional bias: basic residues.

It belongs to the universal ribosomal protein uS9 family.

The protein is Small ribosomal subunit protein uS9 of Dehalococcoides mccartyi (strain ATCC BAA-2266 / KCTC 15142 / 195) (Dehalococcoides ethenogenes (strain 195)).